The sequence spans 377 residues: Erythronate-4-phosphate dehydrogenase (377 aa).

Substrate is bound by residues Ser59 and Thr81. Residue Asp162 coordinates NAD(+). Arg237 is an active-site residue. Asp260 lines the NAD(+) pocket. Glu265 is an active-site residue. His282 acts as the Proton donor in catalysis. Gly285 provides a ligand contact to NAD(+). Tyr286 contacts substrate.

This sequence belongs to the D-isomer specific 2-hydroxyacid dehydrogenase family. PdxB subfamily. In terms of assembly, homodimer.

It is found in the cytoplasm. It catalyses the reaction 4-phospho-D-erythronate + NAD(+) = (R)-3-hydroxy-2-oxo-4-phosphooxybutanoate + NADH + H(+). Its pathway is cofactor biosynthesis; pyridoxine 5'-phosphate biosynthesis; pyridoxine 5'-phosphate from D-erythrose 4-phosphate: step 2/5. Its function is as follows. Catalyzes the oxidation of erythronate-4-phosphate to 3-hydroxy-2-oxo-4-phosphonooxybutanoate. The chain is Erythronate-4-phosphate dehydrogenase from Psychrobacter arcticus (strain DSM 17307 / VKM B-2377 / 273-4).